The chain runs to 209 residues: Guanylate kinase (209 aa).

A Guanylate kinase-like domain is found at 9 to 188; it reads GIMLVMSSPS…SVQQIKSIFI (180 aa). 16–23 serves as a coordination point for ATP; the sequence is SPSGGGKT.

This sequence belongs to the guanylate kinase family.

Its subcellular location is the cytoplasm. It catalyses the reaction GMP + ATP = GDP + ADP. In terms of biological role, essential for recycling GMP and indirectly, cGMP. The sequence is that of Guanylate kinase from Ehrlichia ruminantium (strain Gardel).